We begin with the raw amino-acid sequence, 826 residues long: Periplasmic nitrate reductase (826 aa).

The segment at residues 1 to 32 is a signal peptide (tat-type signal); the sequence is MSISRREFLKANAAVAAATAVGATLPVKIVEA. One can recognise a 4Fe-4S Mo/W bis-MGD-type domain in the interval 39–95; that stretch reads IKWDKAPCRFCGVGCSVLVGTDNGKVVATKGDPESPVNKGLNCIKGYFLSKIMYGKD. Cysteine 46, cysteine 49, cysteine 53, and cysteine 81 together coordinate [4Fe-4S] cluster. Residues lysine 83, glutamine 150, asparagine 175, cysteine 179, 212-219, 262-264, methionine 372, glutamine 376, asparagine 482, 508-509, lysine 531, aspartate 558, and 716-725 contribute to the Mo-bis(molybdopterin guanine dinucleotide) site; these read WGANMAEM, QSD, SD, and TGRVLEHWHT. Phenylalanine 792 contacts substrate. Mo-bis(molybdopterin guanine dinucleotide) contacts are provided by asparagine 800 and lysine 817.

This sequence belongs to the prokaryotic molybdopterin-containing oxidoreductase family. NasA/NapA/NarB subfamily. As to quaternary structure, component of the periplasmic nitrate reductase NapAB complex composed of NapA and NapB. [4Fe-4S] cluster is required as a cofactor. The cofactor is Mo-bis(molybdopterin guanine dinucleotide). In terms of processing, predicted to be exported by the Tat system. The position of the signal peptide cleavage has not been experimentally proven.

It is found in the periplasm. The catalysed reaction is 2 Fe(II)-[cytochrome] + nitrate + 2 H(+) = 2 Fe(III)-[cytochrome] + nitrite + H2O. Catalytic subunit of the periplasmic nitrate reductase complex NapAB. Receives electrons from NapB and catalyzes the reduction of nitrate to nitrite. The polypeptide is Periplasmic nitrate reductase (Shewanella halifaxensis (strain HAW-EB4)).